The primary structure comprises 104 residues: Large ribosomal subunit protein bL21 (104 aa).

This sequence belongs to the bacterial ribosomal protein bL21 family. As to quaternary structure, part of the 50S ribosomal subunit. Contacts protein L20.

In terms of biological role, this protein binds to 23S rRNA in the presence of protein L20. The protein is Large ribosomal subunit protein bL21 of Clostridium botulinum (strain 657 / Type Ba4).